The sequence spans 440 residues: Probable cytosolic iron-sulfur protein assembly protein 1 (440 aa).

WD repeat units follow at residues 12–51 (AHAE…SSDG), 71–110 (DHKR…SDDE), 148–187 (GHES…DFEC), 193–233 (EHSQ…WCIF), 278–317 (EEDE…PDSA), 326–379 (AHSR…SPSS), and 401–440 (HGVN…VVRD). Positions 107–116 (SDDEEEEDEG) are enriched in acidic residues. Residues 107–137 (SDDEEEEDEGAQGVYKPAGVDSDGDGDGGKE) are disordered.

This sequence belongs to the WD repeat CIA1 family.

Its function is as follows. Essential component of the cytosolic iron-sulfur (Fe/S) protein assembly machinery. Required for the maturation of extramitochondrial Fe/S proteins. This chain is Probable cytosolic iron-sulfur protein assembly protein 1, found in Cryptococcus neoformans var. neoformans serotype D (strain B-3501A) (Filobasidiella neoformans).